Consider the following 319-residue polypeptide: Probable NAD(P)H-dependent D-xylose reductase xyl1 (319 aa).

Tyr50 functions as the Proton donor in the catalytic mechanism. His112 lines the substrate pocket. Residues Ser166–Asn167, Ser215–Glu224, and Lys271–Asn281 contribute to the NAD(+) site.

This sequence belongs to the aldo/keto reductase family.

It carries out the reaction xylitol + NAD(+) = D-xylose + NADH + H(+). The catalysed reaction is xylitol + NADP(+) = D-xylose + NADPH + H(+). It participates in carbohydrate metabolism; D-xylose degradation. Its function is as follows. Catalyzes the initial reaction in the xylose utilization pathway by reducing D-xylose into xylitol. Xylose is a major component of hemicelluloses such as xylan. Most fungi utilize D-xylose via three enzymatic reactions, xylose reductase (XR), xylitol dehydrogenase (XDH), and xylulokinase, to form xylulose 5-phosphate, which enters pentose phosphate pathway. This chain is Probable NAD(P)H-dependent D-xylose reductase xyl1 (xyl1), found in Emericella nidulans (strain FGSC A4 / ATCC 38163 / CBS 112.46 / NRRL 194 / M139) (Aspergillus nidulans).